The sequence spans 525 residues: D-arabinono-1,4-lactone oxidase (525 aa).

Residues 20 to 195 form the FAD-binding PCMH-type domain; the sequence is IYSSRPEWYF…VGATVRVVPA (176 aa). Residue histidine 58 is modified to Pros-8alpha-FAD histidine.

Belongs to the oxygen-dependent FAD-linked oxidoreductase family. Requires FAD as cofactor.

The protein localises to the mitochondrion membrane. The enzyme catalyses D-arabinono-1,4-lactone + O2 = dehydro-D-arabinono-1,4-lactone + H2O2 + H(+). Its pathway is cofactor biosynthesis; D-erythroascorbate biosynthesis; dehydro-D-arabinono-1,4-lactone from D-arabinose: step 2/2. This is D-arabinono-1,4-lactone oxidase (ALO1) from Candida glabrata (strain ATCC 2001 / BCRC 20586 / JCM 3761 / NBRC 0622 / NRRL Y-65 / CBS 138) (Yeast).